A 419-amino-acid chain; its full sequence is Transcription factor 7 (419 aa).

The span at 1 to 12 shows a compositional bias: gly residues; sequence MPQLDSGGGGAG. Positions 1–60 are CTNNB1-binding; the sequence is MPQLDSGGGGAGRGDDLGAPDELLAFQDEGEEQDDKNRDSPVGPERDLAELKSSLVNESE. Disordered regions lie at residues 1-111 and 134-200; these read MPQL…LKAP and PASG…SGFY. 2 stretches are compositionally biased toward basic and acidic residues: residues 35-50 and 86-109; these read DKNRDSPVGPERDLAE and LGREHTSQRLFPDKLPESLEDGLK. Pro residues predominate over residues 143–158; sequence QPQPPLHNKPGQPPHG. Residues 304–372 constitute a DNA-binding region (HMG box); that stretch reads IKKPLNAFML…LHMQLYPGWS (69 aa). The disordered stretch occupies residues 374–406; sequence RDNYGKKKRRSREKHQESTTGGKRNAFGTYPEK. The short motif at 379 to 385 is the Nuclear localization signal element; the sequence is KKKRRSR.

The protein belongs to the TCF/LEF family. As to quaternary structure, binds the armadillo repeat of CTNNB1 and forms a stable complex. Binds TLE5, TLE1, TLE2, TLE3 and TLE4. Interacts with MLLT11. Interacts with DAZAP2. Interacts (via N-terminus) with SOX13; inhibits WNT-mediated transcriptional activity. As to expression, T-cell specific. Expressed in triple negative 2 subpopulations of T-cells and both the gamma-delta and alpha-beta T-cell lineages. Expressed in Il7 receptor positive innate-like T-cells in the mesenteric lymph nodes and spleen (at protein level).

Its subcellular location is the nucleus. Transcriptional activator involved in T-cell lymphocyte differentiation. Necessary for the survival of CD4(+) CD8(+) immature thymocytes. Isoforms lacking the N-terminal CTNNB1 binding domain cannot fulfill this role. Binds to the T-lymphocyte-specific enhancer element (5'-WWCAAAG-3') found in the promoter of the CD3E gene. Represses expression of the T-cell receptor gamma gene in alpha-beta T-cell lineages. Inhibits the developmental program of IL17A effector gamma-delta T-cell subsets via regulating the transcription of T-cell lineage effector proteins. Required for the development of natural killer receptor-positive lymphoid tissue inducer T-cells. TLE1, TLE2, TLE3 and TLE4 repress transactivation mediated by TCF7 and CTNNB1. May also act as feedback transcriptional repressor of CTNNB1 and TCF7L2 target genes. This Mus musculus (Mouse) protein is Transcription factor 7.